The following is a 149-amino-acid chain: Arginine regulator (149 aa).

It belongs to the ArgR family.

It localises to the cytoplasm. Its pathway is amino-acid degradation; L-arginine degradation via ADI pathway. In terms of biological role, regulates the transcription of the arc operon, involved in arginine catabolism. The protein is Arginine regulator (argR1) of Bacillus thuringiensis subsp. konkukian (strain 97-27).